Reading from the N-terminus, the 303-residue chain is Large ribosomal subunit protein uL1m (303 aa).

It belongs to the universal ribosomal protein uL1 family. As to quaternary structure, component of the mitochondrial large ribosomal subunit (mt-LSU). Mature N.crassa 74S mitochondrial ribosomes consist of a small (37S) and a large (54S) subunit. The 37S small subunit contains a 16S ribosomal RNA (16S mt-rRNA) and 32 different proteins. The 54S large subunit contains a 23S rRNA (23S mt-rRNA) and 42 different proteins.

It localises to the mitochondrion. Functionally, component of the mitochondrial ribosome (mitoribosome), a dedicated translation machinery responsible for the synthesis of mitochondrial genome-encoded proteins, including at least some of the essential transmembrane subunits of the mitochondrial respiratory chain. The mitoribosomes are attached to the mitochondrial inner membrane and translation products are cotranslationally integrated into the membrane. The polypeptide is Large ribosomal subunit protein uL1m (mrpl1) (Neurospora crassa (strain ATCC 24698 / 74-OR23-1A / CBS 708.71 / DSM 1257 / FGSC 987)).